A 166-amino-acid polypeptide reads, in one-letter code: ATP synthase subunit b 1 (166 aa).

A helical membrane pass occupies residues 7-29 (FWTALAFVLFFVIFGRKLWVAIT).

The protein belongs to the ATPase B chain family. As to quaternary structure, F-type ATPases have 2 components, F(1) - the catalytic core - and F(0) - the membrane proton channel. F(1) has five subunits: alpha(3), beta(3), gamma(1), delta(1), epsilon(1). F(0) has three main subunits: a(1), b(2) and c(10-14). The alpha and beta chains form an alternating ring which encloses part of the gamma chain. F(1) is attached to F(0) by a central stalk formed by the gamma and epsilon chains, while a peripheral stalk is formed by the delta and b chains.

It localises to the cell inner membrane. F(1)F(0) ATP synthase produces ATP from ADP in the presence of a proton or sodium gradient. F-type ATPases consist of two structural domains, F(1) containing the extramembraneous catalytic core and F(0) containing the membrane proton channel, linked together by a central stalk and a peripheral stalk. During catalysis, ATP synthesis in the catalytic domain of F(1) is coupled via a rotary mechanism of the central stalk subunits to proton translocation. Functionally, component of the F(0) channel, it forms part of the peripheral stalk, linking F(1) to F(0). The sequence is that of ATP synthase subunit b 1 from Gluconobacter oxydans (strain 621H) (Gluconobacter suboxydans).